The sequence spans 485 residues: Ribosomal protein S6 kinase beta-2 (485 aa).

The interval 1-26 is disordered; that stretch reads MAAVFDLDLETEEGSEGEGEPEFSPA. Residues 7 to 21 show a composition bias toward acidic residues; the sequence is LDLETEEGSEGEGEP. Ser-15 carries the phosphoserine modification. The Protein kinase domain occupies 67-328; sequence FELLSVLGKG…AADVQRHPFF (262 aa). ATP contacts are provided by residues 73–81 and Lys-99; that span reads LGKGGYGKV. The active-site Proton acceptor is Asp-194. In terms of domain architecture, AGC-kinase C-terminal spans 329–399; that stretch reads RHINWDDLLA…VAPSVLDSIK (71 aa). The disordered stretch occupies residues 407 to 485; that stretch reads KLRSPRRLNS…SKKGRGRSGR (79 aa). Ser-417 carries the phosphoserine modification. Thr-420 is modified (phosphothreonine). Phosphoserine is present on Ser-423. The segment covering 436–469 has biased composition (pro residues); it reads SPGPPEPMEPSLPPLLPSPPSPPPTSTAPLPIRP. Residues 474–480 carry the Nuclear localization signal motif; the sequence is KKSKKGR. Residues 474-485 are compositionally biased toward basic residues; the sequence is KKSKKGRGRSGR. Phosphoserine; by PKC is present on Ser-476.

Belongs to the protein kinase superfamily. AGC Ser/Thr protein kinase family. S6 kinase subfamily. Phosphorylated and activated by MTOR. Phosphorylation by PKC within the NLS in response to mitogenic stimuli causes cytoplasmic retention.

The protein localises to the cytoplasm. It is found in the nucleus. The catalysed reaction is L-seryl-[protein] + ATP = O-phospho-L-seryl-[protein] + ADP + H(+). The enzyme catalyses L-threonyl-[protein] + ATP = O-phospho-L-threonyl-[protein] + ADP + H(+). In terms of biological role, phosphorylates specifically ribosomal protein S6. Seems to act downstream of mTOR signaling in response to growth factors and nutrients to promote cell proliferation, cell growth and cell cycle progression in an alternative pathway regulated by MEAK7. The protein is Ribosomal protein S6 kinase beta-2 (Rps6kb2) of Mus musculus (Mouse).